Here is a 109-residue protein sequence, read N- to C-terminus: Large ribosomal subunit protein uL22 (109 aa).

The protein belongs to the universal ribosomal protein uL22 family. Part of the 50S ribosomal subunit.

In terms of biological role, this protein binds specifically to 23S rRNA; its binding is stimulated by other ribosomal proteins, e.g. L4, L17, and L20. It is important during the early stages of 50S assembly. It makes multiple contacts with different domains of the 23S rRNA in the assembled 50S subunit and ribosome. Functionally, the globular domain of the protein is located near the polypeptide exit tunnel on the outside of the subunit, while an extended beta-hairpin is found that lines the wall of the exit tunnel in the center of the 70S ribosome. This Polaromonas sp. (strain JS666 / ATCC BAA-500) protein is Large ribosomal subunit protein uL22.